The primary structure comprises 255 residues: GTP cyclohydrolase FolE2 (255 aa).

Belongs to the GTP cyclohydrolase IV family.

It catalyses the reaction GTP + H2O = 7,8-dihydroneopterin 3'-triphosphate + formate + H(+). The protein operates within cofactor biosynthesis; 7,8-dihydroneopterin triphosphate biosynthesis; 7,8-dihydroneopterin triphosphate from GTP: step 1/1. Its function is as follows. Converts GTP to 7,8-dihydroneopterin triphosphate. The polypeptide is GTP cyclohydrolase FolE2 (Syntrophus aciditrophicus (strain SB)).